We begin with the raw amino-acid sequence, 341 residues long: L-threonine 3-dehydrogenase (341 aa).

Cysteine 38 contributes to the Zn(2+) binding site. Active-site charge relay system residues include threonine 40 and histidine 43. Zn(2+) is bound by residues histidine 63, glutamate 64, cysteine 93, cysteine 96, cysteine 99, and cysteine 107. NAD(+) contacts are provided by residues isoleucine 175, aspartate 195, arginine 200, 262–264, and 286–287; these read LGI and IY.

The protein belongs to the zinc-containing alcohol dehydrogenase family. In terms of assembly, homotetramer. The cofactor is Zn(2+).

The protein resides in the cytoplasm. It carries out the reaction L-threonine + NAD(+) = (2S)-2-amino-3-oxobutanoate + NADH + H(+). It participates in amino-acid degradation; L-threonine degradation via oxydo-reductase pathway; glycine from L-threonine: step 1/2. Catalyzes the NAD(+)-dependent oxidation of L-threonine to 2-amino-3-ketobutyrate. The sequence is that of L-threonine 3-dehydrogenase from Solibacter usitatus (strain Ellin6076).